The primary structure comprises 316 residues: Transaldolase (316 aa).

The active-site Schiff-base intermediate with substrate is Lys132.

Belongs to the transaldolase family. Type 1 subfamily. As to quaternary structure, homodimer.

It localises to the cytoplasm. The enzyme catalyses D-sedoheptulose 7-phosphate + D-glyceraldehyde 3-phosphate = D-erythrose 4-phosphate + beta-D-fructose 6-phosphate. Its pathway is carbohydrate degradation; pentose phosphate pathway; D-glyceraldehyde 3-phosphate and beta-D-fructose 6-phosphate from D-ribose 5-phosphate and D-xylulose 5-phosphate (non-oxidative stage): step 2/3. Transaldolase is important for the balance of metabolites in the pentose-phosphate pathway. The protein is Transaldolase of Vibrio vulnificus (strain CMCP6).